Here is a 516-residue protein sequence, read N- to C-terminus: Ribose import ATP-binding protein RbsA (516 aa).

ABC transporter domains follow at residues 14-250 and 261-504; these read LRLT…VGRA and AKGA…AGIG. ATP is bound at residue 46–53; that stretch reads GENGAGKS.

This sequence belongs to the ABC transporter superfamily. Ribose importer (TC 3.A.1.2.1) family. In terms of assembly, the complex is composed of an ATP-binding protein (RbsA), two transmembrane proteins (RbsC) and a solute-binding protein (RbsB).

Its subcellular location is the cell inner membrane. The catalysed reaction is D-ribose(out) + ATP + H2O = D-ribose(in) + ADP + phosphate + H(+). Functionally, part of the ABC transporter complex RbsABC involved in ribose import. Responsible for energy coupling to the transport system. The protein is Ribose import ATP-binding protein RbsA of Jannaschia sp. (strain CCS1).